Consider the following 720-residue polypeptide: Dedicator of cytokinesis protein 9 (720 aa).

The DOCKER domain occupies 186-638 (KSYASTPELR…LSDIIVPRIC (453 aa)). The segment at 277 to 638 (DEEASMMEDV…LSDIIVPRIC (362 aa)) is interaction with CDC42.

Belongs to the DOCK family. Homodimer. Interacts preferentially with nucleotide-depleted CDC42.

Its subcellular location is the endomembrane system. Its function is as follows. Guanine nucleotide-exchange factor (GEF) that activates CDC42 by exchanging bound GDP for free GTP. Overexpression induces filopodia formation. The chain is Dedicator of cytokinesis protein 9 (Dock9) from Rattus norvegicus (Rat).